The chain runs to 407 residues: Carbamoyl phosphate synthase small chain (407 aa).

The interval 1 to 205 (MTETTSKTAP…LADGYGEQDT (205 aa)) is CPSase. Residues Ser60, Gly257, and Gly259 each contribute to the L-glutamine site. The Glutamine amidotransferase type-1 domain maps to 209–397 (HVVALDFGVK…INLIREKKGE (189 aa)). Catalysis depends on Cys286, which acts as the Nucleophile. Leu287, Gln290, Asn328, Gly330, and Phe331 together coordinate L-glutamine. Active-site residues include His370 and Glu372.

It belongs to the CarA family. As to quaternary structure, composed of two chains; the small (or glutamine) chain promotes the hydrolysis of glutamine to ammonia, which is used by the large (or ammonia) chain to synthesize carbamoyl phosphate. Tetramer of heterodimers (alpha,beta)4.

The enzyme catalyses hydrogencarbonate + L-glutamine + 2 ATP + H2O = carbamoyl phosphate + L-glutamate + 2 ADP + phosphate + 2 H(+). It carries out the reaction L-glutamine + H2O = L-glutamate + NH4(+). Its pathway is amino-acid biosynthesis; L-arginine biosynthesis; carbamoyl phosphate from bicarbonate: step 1/1. The protein operates within pyrimidine metabolism; UMP biosynthesis via de novo pathway; (S)-dihydroorotate from bicarbonate: step 1/3. Small subunit of the glutamine-dependent carbamoyl phosphate synthetase (CPSase). CPSase catalyzes the formation of carbamoyl phosphate from the ammonia moiety of glutamine, carbonate, and phosphate donated by ATP, constituting the first step of 2 biosynthetic pathways, one leading to arginine and/or urea and the other to pyrimidine nucleotides. The small subunit (glutamine amidotransferase) binds and cleaves glutamine to supply the large subunit with the substrate ammonia. This chain is Carbamoyl phosphate synthase small chain, found in Brucella anthropi (strain ATCC 49188 / DSM 6882 / CCUG 24695 / JCM 21032 / LMG 3331 / NBRC 15819 / NCTC 12168 / Alc 37) (Ochrobactrum anthropi).